The chain runs to 620 residues: Transcription factor kayak (620 aa).

Disordered stretches follow at residues 1–36 (MKVK…SNGV) and 184–288 (SDTD…EKRR). The span at 184 to 194 (SDTDDSNASWN) shows a compositional bias: polar residues. Low complexity-rich tracts occupy residues 201 to 233 (GDTT…GANN) and 249 to 266 (ANNN…PAAR). The bZIP domain occupies 284–347 (EEKRRIRRER…NQLKYVIEAH (64 aa)). The basic motif stretch occupies residues 286–305 (KRRIRRERNKAAAARCRKRR). The segment at 312–340 (LTEEVDALVKKGDTLKAEITTLTELRNQL) is leucine-zipper. A disordered region spans residues 375–414 (STGGSSCGSVHSNHSHNNNNNNNNSNDSSSGTITGFDATL). Low complexity predominate over residues 377-405 (GGSSCGSVHSNHSHNNNNNNNNSNDSSSG). A Phosphoserine modification is found at serine 422. Disordered stretches follow at residues 447–466 (GLDS…AKRA) and 590–620 (SGPL…LCPL).

It belongs to the bZIP family. Fos subfamily. Homodimer. Heterodimer with Jra. The kay-Jra heterodimer binds more stably to the AP-1 site than either of the two proteins alone.

Its subcellular location is the nucleus. Functionally, developmentally regulated transcription factor AP-1 binds and recognizes the enhancer DNA sequence: 5'-TGA[CG]TCA-3'. May play a role in the function or determination of a particular subset of cells in the developing embryo. It is able to carry out its function either independently of or in conjunction with Jra. The chain is Transcription factor kayak from Drosophila willistoni (Fruit fly).